The sequence spans 732 residues: Catalase-peroxidase (732 aa).

A signal peptide spans Met1–Ser45. The segment at residues Trp97 to Tyr220 is a cross-link (tryptophyl-tyrosyl-methioninium (Trp-Tyr) (with M-246)). His98 functions as the Proton acceptor in the catalytic mechanism. The tryptophyl-tyrosyl-methioninium (Tyr-Met) (with W-97) cross-link spans Tyr220 to Met246. Residue His261 participates in heme b binding.

The protein belongs to the peroxidase family. Peroxidase/catalase subfamily. As to quaternary structure, homodimer or homotetramer. Heme b is required as a cofactor. In terms of processing, formation of the three residue Trp-Tyr-Met cross-link is important for the catalase, but not the peroxidase activity of the enzyme.

The catalysed reaction is H2O2 + AH2 = A + 2 H2O. It carries out the reaction 2 H2O2 = O2 + 2 H2O. Functionally, bifunctional enzyme with both catalase and broad-spectrum peroxidase activity. The sequence is that of Catalase-peroxidase from Rhizobium rhizogenes (strain K84 / ATCC BAA-868) (Agrobacterium radiobacter).